A 346-amino-acid chain; its full sequence is MFSGKENVSFGVLCLLAGCISTSSCLIHLQAKNIGVLLMMFWCFTGLVNKGINALAFNNSLRLAWTLGCDLSAIIERTWQFGLCCSALCVLQRLEGIASLRQAHSTVWDRKRRLLIDFGVGLGLPALQIPMFFIVQPYRLNVIENIGCSAPLYASVPALFIYHLWRLLVSLVCAVYAVLVLRWFMLRRRQFTAALSSQHSGLSQKKYFRLFALAICERVLVSAGQFYVIIQSLQIGGLLPYTSWAEVHTNFNRILFVPVDTIAHSSLLSLSILRWFSLTPAMALFVFFGLTEEAQSVYKARWKALINLCSSKGKKQTDGRESLDLEAFESHGSKFSVLVQRDTVIC.

Helical transmembrane passes span 8–28, 34–54, 71–94, 115–135, 160–180, 219–239, and 270–290; these read VSFGVLCLLAGCISTSSCLIH, IGVLLMMFWCFTGLVNKGINA, LSAIIERTWQFGLCCSALCVLQRL, LIDFGVGLGLPALQIPMFFIV, FIYHLWRLLVSLVCAVYAVLV, VLVSAGQFYVIIQSLQIGGLL, and LSILRWFSLTPAMALFVFFGL.

Belongs to the G-protein coupled receptor 4 family.

It localises to the membrane. In terms of biological role, receptor for the A1 pheromone, a prenylated mating factor. In Mycosarcoma maydis (Corn smut fungus), this protein is Pheromone receptor 2 (PRA2).